Here is a 129-residue protein sequence, read N- to C-terminus: uncharacterized protein (129 aa).

Residues 1-27 (MLMRKKKLLSRISFGSLFLLCGTILSA) form the signal peptide. Cys28 carries the N-palmitoyl cysteine lipid modification. The S-diacylglycerol cysteine moiety is linked to residue Cys28.

Belongs to the MG439/MG440 family.

It localises to the cell membrane. This is an uncharacterized protein from Mycoplasma pneumoniae (strain ATCC 29342 / M129 / Subtype 1) (Mycoplasmoides pneumoniae).